Consider the following 85-residue polypeptide: Follicular dendritic cell secreted peptide (85 aa).

The signal sequence occupies residues 1–17 (MKKVLLLITAILAVAVG). The interval 75 to 83 (SAPTTPLPS) is O-glycosylated at one site.

Post-translationally, O-glycosylated with core 1 or possibly core 8 glycans. Abundantly expressed in tonsil, lymph node, and trachea; strong expression in prostate; lower expression in thyroid, stomach, and colon.

The protein localises to the secreted. Can bind to the surface of B-lymphoma cells, but not T-lymphoma cells, consistent with a function as a secreted mediator acting upon B-cells. In Homo sapiens (Human), this protein is Follicular dendritic cell secreted peptide (FDCSP).